A 208-amino-acid polypeptide reads, in one-letter code: ATP-dependent Clp protease proteolytic subunit (208 aa).

Serine 107 acts as the Nucleophile in catalysis. Histidine 132 is an active-site residue.

The protein belongs to the peptidase S14 family. In terms of assembly, fourteen ClpP subunits assemble into 2 heptameric rings which stack back to back to give a disk-like structure with a central cavity, resembling the structure of eukaryotic proteasomes.

It is found in the cytoplasm. The enzyme catalyses Hydrolysis of proteins to small peptides in the presence of ATP and magnesium. alpha-casein is the usual test substrate. In the absence of ATP, only oligopeptides shorter than five residues are hydrolyzed (such as succinyl-Leu-Tyr-|-NHMec, and Leu-Tyr-Leu-|-Tyr-Trp, in which cleavage of the -Tyr-|-Leu- and -Tyr-|-Trp bonds also occurs).. In terms of biological role, cleaves peptides in various proteins in a process that requires ATP hydrolysis. Has a chymotrypsin-like activity. Plays a major role in the degradation of misfolded proteins. The chain is ATP-dependent Clp protease proteolytic subunit from Methylorubrum populi (strain ATCC BAA-705 / NCIMB 13946 / BJ001) (Methylobacterium populi).